We begin with the raw amino-acid sequence, 125 residues long: Apolipoprotein C-IV (125 aa).

A signal peptide spans Met-1–Cys-27.

It belongs to the apolipoprotein C4 family.

Its subcellular location is the secreted. May participate in lipoprotein metabolism. This Plecturocebus moloch (Dusky titi monkey) protein is Apolipoprotein C-IV (APOC4).